Reading from the N-terminus, the 408-residue chain is MPEPCLLMQCESSPKEEEIPSLFWGLDPVFLAFAKLYIKDILEMKESQQVPGMYFYNGHPIRRVDIMGAVISVKERETFYSYGVDDATGVINCVCWKRPSNAESSSDPAILSTSRELSMTSQLKKLQETIEQKTKIGIGDIIRVRGYVRMFREEREICATIYYKVDDPVWNMQIARMLELPELYKKVYDQPFRNPALKEEEALNSKDTLDLAGLTALLSEKVKEFLQEKKVQSFYQKELEMVEPLQSLASQPVTHSTCSDQVELKNDAASDIHSVFKNALHLLQEKGFVFQRDGGSDKLYYVTSKDKDLHQKIYQIIKEDCQKPNLWCMLPQEAWRGTEEGLAVVVTLSVCLPLPVDVEKGCHLMHVLNCVLLNLRWDLNKAVLQQVLELLEDQSDIVSTGDHYYTAF.

The interval 8–195 is interaction with CTC1; it reads MQCESSPKEE…KVYDQPFRNP (188 aa). Residues 64–165 constitute a DNA-binding region (OB); that stretch reads VDIMGAVISV…EICATIYYKV (102 aa). Winged helix-turn-helix (wHTH) stretches follow at residues 201–304 and 305–408; these read EALN…YVTS and KDKD…YTAF.

The protein belongs to the STN1 family. Component of the CST complex, composed of TEN1/C17orf106, CTC1/C17orf68 and STN1; in the complex interacts directly with TEN1 and CTC1. Interacts with ACD/TPP1, POT1 and POLA1.

The protein resides in the nucleus. It localises to the chromosome. It is found in the telomere. Functionally, component of the CST complex proposed to act as a specialized replication factor promoting DNA replication under conditions of replication stress or natural replication barriers such as the telomere duplex. The CST complex binds single-stranded DNA with high affinity in a sequence-independent manner, while isolated subunits bind DNA with low affinity by themselves. Initially the CST complex has been proposed to protect telomeres from DNA degradation. However, the CST complex has been shown to be involved in several aspects of telomere replication. The CST complex inhibits telomerase and is involved in telomere length homeostasis; it is proposed to bind to newly telomerase-synthesized 3' overhangs and to terminate telomerase action implicating the association with the ACD:POT1 complex thus interfering with its telomerase stimulation activity. The CST complex is also proposed to be involved in fill-in synthesis of the telomeric C-strand probably implicating recruitment and activation of DNA polymerase alpha. The CST complex facilitates recovery from many forms of exogenous DNA damage; seems to be involved in the re-initiation of DNA replication at repaired forks and/or dormant origins. Required for efficicient replication of the duplex region of the telomere. Promotes efficient replication of lagging-strand telomeres. Promotes general replication start following replication-fork stalling implicating new origin firing. May be in involved in C-strand fill-in during late S/G2 phase independent of its role in telomere duplex replication. This Rattus norvegicus (Rat) protein is CST complex subunit STN1.